Here is a 130-residue protein sequence, read N- to C-terminus: Large ribosomal subunit protein eL32 (130 aa).

Belongs to the eukaryotic ribosomal protein eL32 family.

This is Large ribosomal subunit protein eL32 (rpl32e) from Pyrococcus abyssi (strain GE5 / Orsay).